Here is a 247-residue protein sequence, read N- to C-terminus: Cell division protein ZapD (247 aa).

This sequence belongs to the ZapD family. Interacts with FtsZ.

Its subcellular location is the cytoplasm. In terms of biological role, cell division factor that enhances FtsZ-ring assembly. Directly interacts with FtsZ and promotes bundling of FtsZ protofilaments, with a reduction in FtsZ GTPase activity. In Shigella boydii serotype 4 (strain Sb227), this protein is Cell division protein ZapD.